The primary structure comprises 101 residues: MSMAEGDTLISVDYEIFGKVQGVFFRKYTQAEGKKLGLVGWVQNTDQGTVQGQLQGPASKVRHMQEWLETKGSPKSHIDRASFHNEKVIVKLDYTDFQIVK.

Residue Ser2 is modified to N-acetylserine. The residue at position 2 (Ser2) is an N-acetylalanine. The region spanning 11 to 101 (SVDYEIFGKV…LDYTDFQIVK (91 aa)) is the Acylphosphatase-like domain. Catalysis depends on residues Arg26 and Asn44.

It belongs to the acylphosphatase family. Organ-common type isozyme is found in many different tissues.

The enzyme catalyses an acyl phosphate + H2O = a carboxylate + phosphate + H(+). This is Acylphosphatase-1 (ACYP1) from Bos taurus (Bovine).